Reading from the N-terminus, the 363-residue chain is Flagellar P-ring protein (363 aa).

The signal sequence occupies residues 1–20 (MKCKLIFAVFMLAFSMPSQA).

It belongs to the FlgI family. The basal body constitutes a major portion of the flagellar organelle and consists of four rings (L,P,S, and M) mounted on a central rod.

Its subcellular location is the periplasm. It is found in the bacterial flagellum basal body. Its function is as follows. Assembles around the rod to form the L-ring and probably protects the motor/basal body from shearing forces during rotation. In Shewanella oneidensis (strain ATCC 700550 / JCM 31522 / CIP 106686 / LMG 19005 / NCIMB 14063 / MR-1), this protein is Flagellar P-ring protein.